The primary structure comprises 494 residues: Bifunctional NAD(P)H-hydrate repair enzyme Nnr (494 aa).

Residues 1–221 are NAD(P)H-hydrate epimerase; sequence MDTIMPLPTH…GVEEVFAQHN (221 aa). The region spanning 17-219 is the YjeF N-terminal domain; it reads LKQGEQDAAS…GLGVEEVFAQ (203 aa). Residues 65-69 are NADPHX 1; for epimerase activity; that stretch reads NNGGD. K(+)-binding residues include N66 and D129. Positions 133 to 139 are NADPHX 1; for epimerase activity; that stretch reads GIGLKEV. Residue D162 coordinates (6S)-NADPHX. S165 contributes to the K(+) binding site. In terms of domain architecture, YjeF C-terminal spans 229-494; the sequence is DGKLRHSLLP…LLPHLRELLN (266 aa). Residues 229–494 are ADP-dependent (S)-NAD(P)H-hydrate dehydratase; that stretch reads DGKLRHSLLP…LLPHLRELLN (266 aa). G325 is a (6S)-NADPHX binding site. The tract at residues 371-377 is NADPHX 2; for dehydratase activity; sequence HPVEAAR. Residues 408 to 412 and 427 to 436 each bind ADP; these read KGAGT and NPGMASGGMG. D437 contacts (6S)-NADPHX.

This sequence in the N-terminal section; belongs to the NnrE/AIBP family. The protein in the C-terminal section; belongs to the NnrD/CARKD family. K(+) is required as a cofactor.

It catalyses the reaction (6S)-NADHX + ADP = AMP + phosphate + NADH + H(+). It carries out the reaction (6S)-NADPHX + ADP = AMP + phosphate + NADPH + H(+). The catalysed reaction is (6R)-NADHX = (6S)-NADHX. The enzyme catalyses (6R)-NADPHX = (6S)-NADPHX. Functionally, bifunctional enzyme that catalyzes the epimerization of the S- and R-forms of NAD(P)HX and the dehydration of the S-form of NAD(P)HX at the expense of ADP, which is converted to AMP. This allows the repair of both epimers of NAD(P)HX, a damaged form of NAD(P)H that is a result of enzymatic or heat-dependent hydration. This chain is Bifunctional NAD(P)H-hydrate repair enzyme Nnr (nnr), found in Vibrio cholerae serotype O1 (strain ATCC 39315 / El Tor Inaba N16961).